Consider the following 338-residue polypeptide: Ketol-acid reductoisomerase (NADP(+)) (338 aa).

A KARI N-terminal Rossmann domain is found at 1–181; that stretch reads MKVFYDKDAD…GGGRAGIIET (181 aa). NADP(+) is bound by residues 24–27, arginine 47, and serine 52; that span reads YGSQ. The active site involves histidine 107. Glycine 133 is an NADP(+) binding site. Residues 182 to 327 enclose the KARI C-terminal knotted domain; that stretch reads NFREETETDL…AKLRAMMPWI (146 aa). Mg(2+)-binding residues include aspartate 190, glutamate 194, glutamate 226, and glutamate 230. Position 251 (serine 251) interacts with substrate.

It belongs to the ketol-acid reductoisomerase family. The cofactor is Mg(2+).

The enzyme catalyses (2R)-2,3-dihydroxy-3-methylbutanoate + NADP(+) = (2S)-2-acetolactate + NADPH + H(+). It carries out the reaction (2R,3R)-2,3-dihydroxy-3-methylpentanoate + NADP(+) = (S)-2-ethyl-2-hydroxy-3-oxobutanoate + NADPH + H(+). It functions in the pathway amino-acid biosynthesis; L-isoleucine biosynthesis; L-isoleucine from 2-oxobutanoate: step 2/4. It participates in amino-acid biosynthesis; L-valine biosynthesis; L-valine from pyruvate: step 2/4. Involved in the biosynthesis of branched-chain amino acids (BCAA). Catalyzes an alkyl-migration followed by a ketol-acid reduction of (S)-2-acetolactate (S2AL) to yield (R)-2,3-dihydroxy-isovalerate. In the isomerase reaction, S2AL is rearranged via a Mg-dependent methyl migration to produce 3-hydroxy-3-methyl-2-ketobutyrate (HMKB). In the reductase reaction, this 2-ketoacid undergoes a metal-dependent reduction by NADPH to yield (R)-2,3-dihydroxy-isovalerate. The sequence is that of Ketol-acid reductoisomerase (NADP(+)) from Polynucleobacter asymbioticus (strain DSM 18221 / CIP 109841 / QLW-P1DMWA-1) (Polynucleobacter necessarius subsp. asymbioticus).